Consider the following 160-residue polypeptide: MEKQKVLALPDDVHELSTHRSKSIVNYIITLLAFAKKQGLTHQDIVSWIHEQYEERGYYDEWRHINSQQPVGSFVELFIKGRRLLYDKIELFETEDKYVVNTHTWYEKEPSEAFFYFEIDPEEFSAYASILAIENAKRLGIKIDIVKETDVETAYIYKHQ.

This is an uncharacterized protein from Bacillus subtilis (strain 168).